Reading from the N-terminus, the 660-residue chain is Acetyl-coenzyme A synthetase (660 aa).

CoA is bound by residues 197-200 (RGGK) and threonine 317. ATP-binding positions include 397-399 (GEP), 421-426 (DTFWQT), aspartate 512, and arginine 528. Serine 536 is a binding site for CoA. ATP is bound at residue arginine 539. Residues valine 550 and valine 555 each contribute to the Mg(2+) site. Residue lysine 625 is modified to N6-acetyllysine.

Belongs to the ATP-dependent AMP-binding enzyme family. Requires Mg(2+) as cofactor. In terms of processing, acetylated. Deacetylation by the SIR2-homolog deacetylase activates the enzyme.

It carries out the reaction acetate + ATP + CoA = acetyl-CoA + AMP + diphosphate. Functionally, catalyzes the conversion of acetate into acetyl-CoA (AcCoA), an essential intermediate at the junction of anabolic and catabolic pathways. AcsA undergoes a two-step reaction. In the first half reaction, AcsA combines acetate with ATP to form acetyl-adenylate (AcAMP) intermediate. In the second half reaction, it can then transfer the acetyl group from AcAMP to the sulfhydryl group of CoA, forming the product AcCoA. The polypeptide is Acetyl-coenzyme A synthetase (Cupriavidus metallidurans (strain ATCC 43123 / DSM 2839 / NBRC 102507 / CH34) (Ralstonia metallidurans)).